Reading from the N-terminus, the 445-residue chain is Response regulator protein PilR (445 aa).

Residues 5 to 119 (KALIVDDEPD…RLRELVATAL (115 aa)) enclose the Response regulatory domain. Aspartate 11 and aspartate 54 each carry 4-aspartylphosphate. A Sigma-54 factor interaction domain is found at 135–364 (LLGESPPMRA…LENMLERAYT (230 aa)). Residues 163-170 (GESGSGKE) and 226-235 (ASGGTLFLDE) each bind ATP. The H-T-H motif DNA-binding region spans 418–437 (RWNRTAAAQRLGLTFRSMRY).

Phosphorylated by PilS.

Its subcellular location is the cytoplasm. Member of the two-component regulatory system PilS/PilR that regulates the expression of multiple genes including the type IV pilus (T4P) major subunit PilA. Thereby, plays a major role in the regulation of multiple motility pathways. Upon appropriate environmental signals, the histidine kinase PilS transfers the phosphoryl group onto PilR. In turn, PilR functions as a transcriptional activator by direct binding to a cis-acting sequence upstream of the pilin gene promoter leading to its activation. This Pseudomonas aeruginosa (strain ATCC 15692 / DSM 22644 / CIP 104116 / JCM 14847 / LMG 12228 / 1C / PRS 101 / PAO1) protein is Response regulator protein PilR (pilR).